Consider the following 427-residue polypeptide: Glutamate-1-semialdehyde 2,1-aminomutase (427 aa).

K267 bears the N6-(pyridoxal phosphate)lysine mark.

This sequence belongs to the class-III pyridoxal-phosphate-dependent aminotransferase family. HemL subfamily. As to quaternary structure, homodimer. The cofactor is pyridoxal 5'-phosphate.

It is found in the cytoplasm. The catalysed reaction is (S)-4-amino-5-oxopentanoate = 5-aminolevulinate. It participates in porphyrin-containing compound metabolism; protoporphyrin-IX biosynthesis; 5-aminolevulinate from L-glutamyl-tRNA(Glu): step 2/2. This is Glutamate-1-semialdehyde 2,1-aminomutase from Desulfosudis oleivorans (strain DSM 6200 / JCM 39069 / Hxd3) (Desulfococcus oleovorans).